Here is a 156-residue protein sequence, read N- to C-terminus: Transcription inhibitor protein Gfh1 (156 aa).

A coiled-coil region spans residues 1–74 (MAREVKLTKA…LEDILSRAVI (74 aa)).

Belongs to the GreA/GreB family. Interacts with RNAP.

Its function is as follows. Inhibits all catalytic activities of RNA polymerase (RNAP) by partially occluding its substrate-binding site and preventing NTP binding. The polypeptide is Transcription inhibitor protein Gfh1 (gfh1) (Thermus thermophilus (strain ATCC BAA-163 / DSM 7039 / HB27)).